Consider the following 244-residue polypeptide: E3 ubiquitin-protein ligase RNF166 (244 aa).

The interval 10 to 30 is disordered; it reads AQRPQAPGPGPPRPPPPAGPA. A compositionally biased stretch (pro residues) spans 15–28; it reads APGPGPPRPPPPAG. Residues 40–80 form an RING-type zinc finger; it reads CPICLEVFHRAVGIAGCGHTFCGECLQPCLQVPSPLCPLCR. Zn(2+) contacts are provided by Cys105, Cys108, His120, and Cys124. The segment at 105 to 124 adopts a C2HC RNF-type zinc-finger fold; that stretch reads CRGCSKKVTLAKMRSHVSSC. The 17-residue stretch at 228-244 folds into the UIM domain; the sequence is DEEAALQAALALSLSEN.

It is found in the cytoplasm. It catalyses the reaction S-ubiquitinyl-[E2 ubiquitin-conjugating enzyme]-L-cysteine + [acceptor protein]-L-lysine = [E2 ubiquitin-conjugating enzyme]-L-cysteine + N(6)-ubiquitinyl-[acceptor protein]-L-lysine.. The protein operates within protein modification; protein ubiquitination. In terms of biological role, E3 ubiquitin-protein ligase that promotes the ubiquitination of different substrates. The protein is E3 ubiquitin-protein ligase RNF166 (RNF166) of Gallus gallus (Chicken).